The sequence spans 115 residues: Large ribosomal subunit protein bL19 (115 aa).

The protein belongs to the bacterial ribosomal protein bL19 family.

In terms of biological role, this protein is located at the 30S-50S ribosomal subunit interface and may play a role in the structure and function of the aminoacyl-tRNA binding site. The protein is Large ribosomal subunit protein bL19 (rplS) of Thermotoga maritima (strain ATCC 43589 / DSM 3109 / JCM 10099 / NBRC 100826 / MSB8).